The primary structure comprises 170 residues: Adenine phosphoribosyltransferase (170 aa).

Belongs to the purine/pyrimidine phosphoribosyltransferase family. As to quaternary structure, homodimer.

It is found in the cytoplasm. The catalysed reaction is AMP + diphosphate = 5-phospho-alpha-D-ribose 1-diphosphate + adenine. It functions in the pathway purine metabolism; AMP biosynthesis via salvage pathway; AMP from adenine: step 1/1. In terms of biological role, catalyzes a salvage reaction resulting in the formation of AMP, that is energically less costly than de novo synthesis. The sequence is that of Adenine phosphoribosyltransferase from Thermotoga sp. (strain RQ2).